We begin with the raw amino-acid sequence, 381 residues long: Acetylornithine deacetylase (381 aa).

Zn(2+) is bound at residue histidine 79. The active site involves aspartate 81. Aspartate 111 lines the Zn(2+) pocket. Residue glutamate 143 is part of the active site. Zn(2+)-binding residues include glutamate 144, glutamate 168, and histidine 354.

Belongs to the peptidase M20A family. ArgE subfamily. As to quaternary structure, homodimer. Zn(2+) is required as a cofactor. Co(2+) serves as cofactor. Requires glutathione as cofactor.

The protein resides in the cytoplasm. It carries out the reaction N(2)-acetyl-L-ornithine + H2O = L-ornithine + acetate. Its pathway is amino-acid biosynthesis; L-arginine biosynthesis; L-ornithine from N(2)-acetyl-L-ornithine (linear): step 1/1. Functionally, catalyzes the hydrolysis of the amide bond of N(2)-acetylated L-amino acids. Cleaves the acetyl group from N-acetyl-L-ornithine to form L-ornithine, an intermediate in L-arginine biosynthesis pathway, and a branchpoint in the synthesis of polyamines. The chain is Acetylornithine deacetylase from Buchnera aphidicola subsp. Schizaphis graminum (strain Sg).